We begin with the raw amino-acid sequence, 204 residues long: Crossover junction endodeoxyribonuclease RuvC (204 aa).

Residues D7, E68, and D141 contribute to the active site. Mg(2+) contacts are provided by D7, E68, and D141.

This sequence belongs to the RuvC family. As to quaternary structure, homodimer which binds Holliday junction (HJ) DNA. The HJ becomes 2-fold symmetrical on binding to RuvC with unstacked arms; it has a different conformation from HJ DNA in complex with RuvA. In the full resolvosome a probable DNA-RuvA(4)-RuvB(12)-RuvC(2) complex forms which resolves the HJ. Mg(2+) is required as a cofactor.

The protein localises to the cytoplasm. It carries out the reaction Endonucleolytic cleavage at a junction such as a reciprocal single-stranded crossover between two homologous DNA duplexes (Holliday junction).. Its function is as follows. The RuvA-RuvB-RuvC complex processes Holliday junction (HJ) DNA during genetic recombination and DNA repair. Endonuclease that resolves HJ intermediates. Cleaves cruciform DNA by making single-stranded nicks across the HJ at symmetrical positions within the homologous arms, yielding a 5'-phosphate and a 3'-hydroxyl group; requires a central core of homology in the junction. The consensus cleavage sequence is 5'-(A/T)TT(C/G)-3'. Cleavage occurs on the 3'-side of the TT dinucleotide at the point of strand exchange. HJ branch migration catalyzed by RuvA-RuvB allows RuvC to scan DNA until it finds its consensus sequence, where it cleaves and resolves the cruciform DNA. The protein is Crossover junction endodeoxyribonuclease RuvC of Clavibacter sepedonicus (Clavibacter michiganensis subsp. sepedonicus).